Here is a 509-residue protein sequence, read N- to C-terminus: 2-isopropylmalate synthase (509 aa).

Positions 5–267 constitute a Pyruvate carboxyltransferase domain; it reads IQIFDTTLRD…QTALNLEETK (263 aa). Residues aspartate 14, histidine 202, histidine 204, and asparagine 238 each coordinate Mn(2+). The regulatory domain stretch occupies residues 391–509; the sequence is KLETLQLQYV…AAENVEKVGN (119 aa).

Belongs to the alpha-IPM synthase/homocitrate synthase family. LeuA type 1 subfamily. As to quaternary structure, homodimer. The cofactor is Mn(2+).

The protein resides in the cytoplasm. The catalysed reaction is 3-methyl-2-oxobutanoate + acetyl-CoA + H2O = (2S)-2-isopropylmalate + CoA + H(+). It participates in amino-acid biosynthesis; L-leucine biosynthesis; L-leucine from 3-methyl-2-oxobutanoate: step 1/4. In terms of biological role, catalyzes the condensation of the acetyl group of acetyl-CoA with 3-methyl-2-oxobutanoate (2-ketoisovalerate) to form 3-carboxy-3-hydroxy-4-methylpentanoate (2-isopropylmalate). In Staphylococcus aureus (strain bovine RF122 / ET3-1), this protein is 2-isopropylmalate synthase.